We begin with the raw amino-acid sequence, 186 residues long: Peptidyl-tRNA hydrolase (186 aa).

TRNA is bound at residue Y14. The active-site Proton acceptor is the H19. Positions 64, 66, and 112 each coordinate tRNA.

The protein belongs to the PTH family. Monomer.

It localises to the cytoplasm. It catalyses the reaction an N-acyl-L-alpha-aminoacyl-tRNA + H2O = an N-acyl-L-amino acid + a tRNA + H(+). Hydrolyzes ribosome-free peptidyl-tRNAs (with 1 or more amino acids incorporated), which drop off the ribosome during protein synthesis, or as a result of ribosome stalling. Its function is as follows. Catalyzes the release of premature peptidyl moieties from peptidyl-tRNA molecules trapped in stalled 50S ribosomal subunits, and thus maintains levels of free tRNAs and 50S ribosomes. The sequence is that of Peptidyl-tRNA hydrolase from Bacillus cereus (strain ATCC 14579 / DSM 31 / CCUG 7414 / JCM 2152 / NBRC 15305 / NCIMB 9373 / NCTC 2599 / NRRL B-3711).